A 340-amino-acid chain; its full sequence is 4-hydroxy-2-oxovalerate aldolase (340 aa).

The 251-residue stretch at 5-255 (IVITEVALRD…QTGVDLYKMM (251 aa)) folds into the Pyruvate carboxyltransferase domain. 13 to 14 (RD) lines the substrate pocket. D14 contributes to the Mn(2+) binding site. The active-site Proton acceptor is the H17. The substrate site is built by S167 and H194. The Mn(2+) site is built by H194 and H196. Y285 provides a ligand contact to substrate.

The protein belongs to the 4-hydroxy-2-oxovalerate aldolase family.

It carries out the reaction (S)-4-hydroxy-2-oxopentanoate = acetaldehyde + pyruvate. This chain is 4-hydroxy-2-oxovalerate aldolase, found in Brevibacillus brevis (strain 47 / JCM 6285 / NBRC 100599).